A 411-amino-acid polypeptide reads, in one-letter code: Imidazolonepropionase (411 aa).

2 residues coordinate Fe(3+): His-75 and His-77. 2 residues coordinate Zn(2+): His-75 and His-77. 4-imidazolone-5-propanoate-binding residues include Arg-84, Tyr-147, and His-180. Tyr-147 is an N-formimidoyl-L-glutamate binding site. Residue His-245 participates in Fe(3+) binding. His-245 lines the Zn(2+) pocket. Residue Gln-248 participates in 4-imidazolone-5-propanoate binding. A Fe(3+)-binding site is contributed by Asp-320. Asp-320 is a Zn(2+) binding site. Residues Asn-322 and Gly-324 each contribute to the N-formimidoyl-L-glutamate site. Residue Thr-325 coordinates 4-imidazolone-5-propanoate.

It belongs to the metallo-dependent hydrolases superfamily. HutI family. Zn(2+) serves as cofactor. It depends on Fe(3+) as a cofactor.

It localises to the cytoplasm. It catalyses the reaction 4-imidazolone-5-propanoate + H2O = N-formimidoyl-L-glutamate. It participates in amino-acid degradation; L-histidine degradation into L-glutamate; N-formimidoyl-L-glutamate from L-histidine: step 3/3. Its function is as follows. Catalyzes the hydrolytic cleavage of the carbon-nitrogen bond in imidazolone-5-propanoate to yield N-formimidoyl-L-glutamate. It is the third step in the universal histidine degradation pathway. The sequence is that of Imidazolonepropionase from Photobacterium profundum (strain SS9).